A 293-amino-acid polypeptide reads, in one-letter code: UDP-3-O-acyl-N-acetylglucosamine deacetylase (293 aa).

The Zn(2+) site is built by histidine 79, histidine 236, and aspartate 240. Histidine 263 serves as the catalytic Proton donor.

Belongs to the LpxC family. The cofactor is Zn(2+).

The catalysed reaction is a UDP-3-O-[(3R)-3-hydroxyacyl]-N-acetyl-alpha-D-glucosamine + H2O = a UDP-3-O-[(3R)-3-hydroxyacyl]-alpha-D-glucosamine + acetate. Its pathway is glycolipid biosynthesis; lipid IV(A) biosynthesis; lipid IV(A) from (3R)-3-hydroxytetradecanoyl-[acyl-carrier-protein] and UDP-N-acetyl-alpha-D-glucosamine: step 2/6. In terms of biological role, catalyzes the hydrolysis of UDP-3-O-myristoyl-N-acetylglucosamine to form UDP-3-O-myristoylglucosamine and acetate, the committed step in lipid A biosynthesis. This is UDP-3-O-acyl-N-acetylglucosamine deacetylase from Phenylobacterium zucineum (strain HLK1).